The chain runs to 603 residues: Multicopper oxidase MCE (603 aa).

An N-terminal signal peptide occupies residues 1–21; it reads MNTFICSALICLSWLPGFIQA. One can recognise a Plastocyanin-like 1 domain in the interval 30–144; that stretch reads ITYAKGAPDG…YGALWIRPKE (115 aa). A glycan (N-linked (GlcNAc...) asparagine) is linked at N75. Cu cation contacts are provided by H79, H81, H123, and H125. 10 N-linked (GlcNAc...) asparagine glycosylation sites follow: N155, N180, N235, N256, N272, N275, N388, N394, N413, and N455. The 181-residue stretch at 173–353 folds into the Plastocyanin-like 2 domain; that stretch reads LIVSDWSNFT…TPGDYTIRLP (181 aa). The Plastocyanin-like 3 domain occupies 450–581; the sequence is LLYNPNSTAA…GGMAGVIMDG (132 aa). Position 495 (H495) interacts with Cu cation. N-linked (GlcNAc...) asparagine glycosylation is found at N512 and N595.

The protein belongs to the multicopper oxidase family.

The catalysed reaction is 4 monapinone A + O2 = 2 dinapinone A + 2 H2O. It carries out the reaction 4 monapinone E + O2 = 2 dinapinone E + 2 H2O. It participates in secondary metabolite biosynthesis. Its function is as follows. Multicopper oxidase; part of the gene cluster that mediates the biosynthesis of dinapinones DPA1 (or (M)-DPA) and DPA2 (or (P)-DPA), biaryl dihydronaphthopyranones that act in concert as inhibitors of triacylglycerol accumulation in mammalian cells. The first step in the pathway corresponds to the biosynthesis of dihydroxy-decanoyl-CoA by the fungal type I fatty acid synthase (formed by ORF4 and ORF5). The cluster-specific polyketide synthase (ORF7) then accepts and extends dihydroxy-decanoyl-CoA with 6 malonyl-CoA moieties and cyclizes the molecule to produce a putative polyhydroxynaphthopyranone intermediate, which is further methylated by the cluster-specific methyltransferase (ORF1) at 7-OH to produce monapinone A (MPA). MCE catalyzes the regioselective biaryl coupling of monapinone A (MPA) at the 8,8'-positions to afford dimeric atropisomers DPA1 and DPA2 in a ratio of approximately 1:2.5. Monapinone E (MPE) also appears to be a substrate for MCE and provides the atropisomers dinapinones DPE1 (or (M)-DPE) and DPE2 (or (P)-DPE). The protein is Multicopper oxidase MCE of Talaromyces pinophilus (Penicillium pinophilum).